A 184-amino-acid polypeptide reads, in one-letter code: Oligoribonuclease (184 aa).

Residues 10-172 (LVWVDCEMTG…ADVLESIAEL (163 aa)) form the Exonuclease domain. The active site involves Tyr-129.

This sequence belongs to the oligoribonuclease family.

It localises to the cytoplasm. Functionally, 3'-to-5' exoribonuclease specific for small oligoribonucleotides. In Tropheryma whipplei (strain Twist) (Whipple's bacillus), this protein is Oligoribonuclease.